Here is a 216-residue protein sequence, read N- to C-terminus: Glycerol-3-phosphate acyltransferase (216 aa).

Transmembrane regions (helical) follow at residues 4–24 (TIIGLILAYLLGSIPTGLWIG), 71–91 (LPFFLHIEGVSPLVFGLLAVI), 113–133 (VVLGFSPAFFVYLIVIFASIL), 144–164 (VLSAVIAILSALLFPLVGFIL), and 165–185 (PSYDLFFTLIIIALALIIILR).

The protein belongs to the PlsY family. In terms of assembly, probably interacts with PlsX.

It localises to the cell membrane. The enzyme catalyses an acyl phosphate + sn-glycerol 3-phosphate = a 1-acyl-sn-glycero-3-phosphate + phosphate. It functions in the pathway lipid metabolism; phospholipid metabolism. Its function is as follows. Catalyzes the transfer of an acyl group from acyl-phosphate (acyl-PO(4)) to glycerol-3-phosphate (G3P) to form lysophosphatidic acid (LPA). This enzyme utilizes acyl-phosphate as fatty acyl donor, but not acyl-CoA or acyl-ACP. This chain is Glycerol-3-phosphate acyltransferase, found in Streptococcus sanguinis (strain SK36).